A 289-amino-acid chain; its full sequence is Serine/threonine-protein phosphatase Pgam5, mitochondrial (289 aa).

The protein belongs to the phosphoglycerate mutase family. BPG-dependent PGAM subfamily. As to quaternary structure, interacts with Pk92B/ASK1.

It localises to the mitochondrion outer membrane. The enzyme catalyses O-phospho-L-seryl-[protein] + H2O = L-seryl-[protein] + phosphate. It catalyses the reaction O-phospho-L-threonyl-[protein] + H2O = L-threonyl-[protein] + phosphate. Displays phosphatase activity for serine/threonine residues, and dephosphorylates and activates Pk92B kinase. Has apparently no phosphoglycerate mutase activity. The protein is Serine/threonine-protein phosphatase Pgam5, mitochondrial of Drosophila grimshawi (Hawaiian fruit fly).